The sequence spans 421 residues: Synaptotagmin-1 (421 aa).

At 1-57 (MVSASHPEALAAPVTTVATLVPHNATEPASPGEGKEDAFSKLKQKFMNELHKIPLPP) the chain is on the vesicular side. The N-linked (GlcNAc...) asparagine glycan is linked to Asn-24. A helical membrane pass occupies residues 58-79 (WALIAIAIVAVLLVVTCCFCVC). S-palmitoyl cysteine attachment occurs at residues Cys-74, Cys-75, Cys-77, Cys-79, and Cys-82. Topologically, residues 80-421 (KKCLFKKKNK…EVDAMLAVKK (342 aa)) are cytoplasmic. A disordered region spans residues 112–141 (TMKDQALKDDDAETGLTDGEEKEEPKEEEK). Residues 121–133 (DDAETGLTDGEEK) are compositionally biased toward acidic residues. Residue Thr-128 is modified to Phosphothreonine. The phospholipid binding stretch occupies residues 135-381 (EPKEEEKLGK…AIGKVFVGYN (247 aa)). A C2 1 domain is found at 141–260 (KLGKLQYSLD…DFGHVTEEWR (120 aa)). 3 residues coordinate Ca(2+): Leu-171, Asp-172, and Asp-178. Position 229 is a phosphotyrosine (Tyr-229). Residues Asp-230, Phe-231, Asp-232, Ser-235, Lys-236, and Asp-238 each contribute to the Ca(2+) site. Ser-264 is subject to Phosphoserine. A C2 2 domain is found at 272-405 (KLGDICFSLR…NPRRPIAQWH (134 aa)). The Ca(2+) site is built by Asp-303 and Asp-309. Ser-342 and Ser-344 each carry phosphoserine. Residues Asp-363, Asp-365, and Asp-371 each contribute to the Ca(2+) site.

This sequence belongs to the synaptotagmin family. As to quaternary structure, homotetramer. Heterodimer; heterodimerizes with SYT2 in presence of calcium. Interacts with SCAMP5. Interacts with STON2. Forms a complex with SV2B, syntaxin 1 and SNAP25. Interacts with SV2A, SV2B and SV2C. Interacts with RIMS1. Interacts with PRRT2. Interacts with DNAJC5 in a phosphorylation-dependent manner. Interacts (via N-terminus) with RAB3A. Interacts with SYT12. Interacts with calmodulin. Interacts with DNM1 (via C-terminal proline-rich domain (PRD)); this interaction facilitates vesicle fission during clathrin-mediated endocytosis (CME). (Microbial infection) Interacts with C.botulinum neurotoxin type B (BoNT/B, botB). Has lower affinity for BoNT/B than Syt2; mutating its residues to match those in Syt2 increases its affinity. In terms of assembly, (Microbial infection) Interacts with C.botulinum neurotoxin type G (BoNT/G, botG). Ca(2+) is required as a cofactor. Post-translationally, glycosylated. Expressed in the brain (at protein level). Predominantly expressed in rostral, phylogenetically younger brain regions, and in some endocrine tissues.

Its subcellular location is the cytoplasmic vesicle. The protein localises to the secretory vesicle membrane. It is found in the secretory vesicle. The protein resides in the synaptic vesicle membrane. It localises to the chromaffin granule membrane. Its subcellular location is the cytoplasm. Functionally, calcium sensor that participates in triggering neurotransmitter release at the synapse. May have a regulatory role in the membrane interactions during trafficking of synaptic vesicles at the active zone of the synapse. It binds acidic phospholipids with a specificity that requires the presence of both an acidic head group and a diacyl backbone. A Ca(2+)-dependent interaction between synaptotagmin and putative receptors for activated protein kinase C has also been reported. It can bind to at least three additional proteins in a Ca(2+)-independent manner; these are neurexins, syntaxin and AP2. Plays a role in dendrite formation by melanocytes. In terms of biological role, (Microbial infection) Receptor for C.botulinum neurotoxin type B (BoNT/B, botB); interaction is improved in the presence of gangliosides. BoNT/B toxin binds to the membrane proximal vesicular domain of Syt1 (residues 32-51). (Microbial infection) Receptor for C.botulinum neurotoxin type G (BoNT/G, botG); unlike the case with BoNT/B, interaction is not improved in the presence of gangliosides. BoNT/G toxin binds to the vesicular domain of Syt1 (residues 32-53). The chain is Synaptotagmin-1 from Rattus norvegicus (Rat).